Consider the following 127-residue polypeptide: Interacting with cytoskeleton protein 1 (127 aa).

Its subcellular location is the vacuole membrane. Its function is as follows. Required for viability of cells lacking mtDNA. The polypeptide is Interacting with cytoskeleton protein 1 (ICY1) (Saccharomyces cerevisiae (strain ATCC 204508 / S288c) (Baker's yeast)).